A 268-amino-acid polypeptide reads, in one-letter code: Shikimate dehydrogenase (NADP(+)) (268 aa).

Residues 13-15 (SLS) and T60 contribute to the shikimate site. K64 acts as the Proton acceptor in catalysis. Residue E76 participates in NADP(+) binding. Shikimate is bound by residues N85 and D100. NADP(+) contacts are provided by residues 124–128 (GAGGA), 148–153 (NRTMAR), and I209. Residue Y211 participates in shikimate binding. G232 contributes to the NADP(+) binding site.

The protein belongs to the shikimate dehydrogenase family. As to quaternary structure, homodimer.

It catalyses the reaction shikimate + NADP(+) = 3-dehydroshikimate + NADPH + H(+). It functions in the pathway metabolic intermediate biosynthesis; chorismate biosynthesis; chorismate from D-erythrose 4-phosphate and phosphoenolpyruvate: step 4/7. In terms of biological role, involved in the biosynthesis of the chorismate, which leads to the biosynthesis of aromatic amino acids. Catalyzes the reversible NADPH linked reduction of 3-dehydroshikimate (DHSA) to yield shikimate (SA). The protein is Shikimate dehydrogenase (NADP(+)) of Staphylococcus aureus (strain bovine RF122 / ET3-1).